The chain runs to 819 residues: Outer membrane usher protein CssD (819 aa).

Belongs to the fimbrial export usher family.

The protein resides in the cell outer membrane. In terms of biological role, involved in the export and assembly of C6 fimbrial subunits across the outer membrane. This is Outer membrane usher protein CssD (cssD) from Escherichia coli.